The sequence spans 177 residues: Translation initiation factor IF-3 (177 aa).

It belongs to the IF-3 family. Monomer.

Its subcellular location is the cytoplasm. Functionally, IF-3 binds to the 30S ribosomal subunit and shifts the equilibrium between 70S ribosomes and their 50S and 30S subunits in favor of the free subunits, thus enhancing the availability of 30S subunits on which protein synthesis initiation begins. In Nostoc punctiforme (strain ATCC 29133 / PCC 73102), this protein is Translation initiation factor IF-3.